The primary structure comprises 468 residues: Probable protein phosphatase 2C 52 (468 aa).

The PPM-type phosphatase domain occupies serine 67 to leucine 372. Mn(2+) contacts are provided by aspartate 102, glycine 103, aspartate 317, and aspartate 363. Residues arginine 413 to glutamate 429 show a composition bias toward polar residues. The interval arginine 413 to asparagine 442 is disordered.

Belongs to the PP2C family. Mg(2+) is required as a cofactor. It depends on Mn(2+) as a cofactor.

It catalyses the reaction O-phospho-L-seryl-[protein] + H2O = L-seryl-[protein] + phosphate. The enzyme catalyses O-phospho-L-threonyl-[protein] + H2O = L-threonyl-[protein] + phosphate. This is Probable protein phosphatase 2C 52 from Arabidopsis thaliana (Mouse-ear cress).